The sequence spans 381 residues: Putative acetyl-CoA C-acetyltransferase VraB (381 aa).

The active-site Acyl-thioester intermediate is the Cys86. His338 acts as the Proton acceptor in catalysis.

This sequence belongs to the thiolase-like superfamily. Thiolase family.

This chain is Putative acetyl-CoA C-acetyltransferase VraB (vraB), found in Staphylococcus haemolyticus (strain JCSC1435).